The sequence spans 836 residues: Protein translocase subunit SecA (836 aa).

ATP is bound by residues Gln-85, 103 to 107, and Asp-492; that span reads GEGKT. Residues 786–817 are disordered; the sequence is REQVAKETSTNQGGDDTLKKQPIKKEPKIGRN. Over residues 801–816 the composition is skewed to basic and acidic residues; the sequence is DTLKKQPIKKEPKIGR. Residues Cys-820, Cys-822, Cys-831, and Cys-832 each contribute to the Zn(2+) site.

It belongs to the SecA family. As to quaternary structure, monomer and homodimer. Part of the essential Sec protein translocation apparatus which comprises SecA, SecYEG and auxiliary proteins SecDF. Other proteins may also be involved. Zn(2+) is required as a cofactor.

The protein resides in the cell membrane. Its subcellular location is the cytoplasm. It carries out the reaction ATP + H2O + cellular proteinSide 1 = ADP + phosphate + cellular proteinSide 2.. Functionally, part of the Sec protein translocase complex. Interacts with the SecYEG preprotein conducting channel. Has a central role in coupling the hydrolysis of ATP to the transfer of proteins into and across the cell membrane, serving as an ATP-driven molecular motor driving the stepwise translocation of polypeptide chains across the membrane. In Clostridium tetani (strain Massachusetts / E88), this protein is Protein translocase subunit SecA.